A 257-amino-acid polypeptide reads, in one-letter code: MDVCVIDHPLAAARLTVLRDERTDTAGFRAALRDLTLMLVYEASRDAPRKSVRIRTPVAAAAGTRLVNPPLLVPVLRAGLGMVDPAQAALPEAEVGFVGVARDEQTHRPVPYLAALPDKLAGRPVMVLDPMLATGGSMAHTLGLLQRRGATDITVLCVVAAPEGLAAVGETAPDARVFTAAVDKGLNKAAYIVPGLGDAGDRQFGPNLFTSSAPSRPEAPAGRGRAAAKTPGRRSARSESPSSTSPSARSRKAAPPA.

5-phospho-alpha-D-ribose 1-diphosphate is bound by residues arginine 77, arginine 102, and 129-137 (DPMLATGGS). Uracil is bound by residues isoleucine 192 and 197 to 199 (GDA). Aspartate 198 contributes to the 5-phospho-alpha-D-ribose 1-diphosphate binding site. The tract at residues 203–257 (QFGPNLFTSSAPSRPEAPAGRGRAAAKTPGRRSARSESPSSTSPSARSRKAAPPA) is disordered. Composition is skewed to low complexity over residues 211-230 (SSAP…AAKT) and 238-248 (SESPSSTSPSA).

Belongs to the UPRTase family. It depends on Mg(2+) as a cofactor.

The catalysed reaction is UMP + diphosphate = 5-phospho-alpha-D-ribose 1-diphosphate + uracil. It functions in the pathway pyrimidine metabolism; UMP biosynthesis via salvage pathway; UMP from uracil: step 1/1. Its activity is regulated as follows. Allosterically activated by GTP. Functionally, catalyzes the conversion of uracil and 5-phospho-alpha-D-ribose 1-diphosphate (PRPP) to UMP and diphosphate. This chain is Uracil phosphoribosyltransferase, found in Mycolicibacterium paratuberculosis (strain ATCC BAA-968 / K-10) (Mycobacterium paratuberculosis).